Here is a 1412-residue protein sequence, read N- to C-terminus: MPN domain-containing protein CG4751 (1412 aa).

Basic and acidic residues predominate over residues 1-10 (MENGVEHGVD). A disordered region spans residues 1-123 (MENGVEHGVD…TKENYEGFNG (123 aa)). Composition is skewed to acidic residues over residues 23 to 35 (GEGD…EVEG) and 103 to 114 (SDAGDEDNDDET). The RAMA domain maps to 113-219 (ETKENYEGFN…AYKNTYLRKC (107 aa)). An MPN domain is found at 284–420 (ITVNSSALLL…LESVVKCIWI (137 aa)). Zn(2+) is bound by residues His-361, His-363, and Asp-374. 7 disordered regions span residues 554–589 (INPP…QKAS), 669–734 (SALN…DIAR), 853–891 (GGSG…NSYK), 1027–1066 (SIPP…QQQQ), 1271–1318 (MKPP…NSGG), 1330–1376 (SSVP…SGGV), and 1389–1412 (LAAP…LSHD). Residues 572 to 600 (SGRKAEEESNAQAEQKASELKVMSLQEQL) adopt a coiled-coil conformation. Phosphoserine is present on residues Ser-699, Ser-701, Ser-705, Ser-719, Ser-723, and Ser-728. The segment covering 702-720 (PAKSDTSSHASTSRTRNSP) has biased composition (polar residues). 2 stretches are compositionally biased toward low complexity: residues 873–891 (KSSS…NSYK) and 1036–1066 (SSGS…QQQQ). Residues 1275–1290 (KSTTPSSARTRESSAS) show a composition bias toward polar residues. Phosphoserine is present on residues Ser-1288 and Ser-1290. Thr-1297 carries the phosphothreonine modification. Positions 1360 to 1370 (LYGELAPPGAL) are enriched in low complexity.

The protein belongs to the peptidase M67 family.

Probable protease. The chain is MPN domain-containing protein CG4751 from Drosophila melanogaster (Fruit fly).